The primary structure comprises 362 residues: Endolytic peptidoglycan transglycosylase RlpA (362 aa).

A signal peptide spans 1-17; sequence MRKQWLGICIAAGMLAA. C18 is lipidated: N-palmitoyl cysteine. A lipid anchor (S-diacylglycerol cysteine) is attached at C18. Positions 198 to 276 are disordered; it reads PDLSGGAGTS…PSTTPATSPA (79 aa). The span at 262 to 276 shows a compositional bias: low complexity; the sequence is PVVTAPSTTPATSPA. The SPOR domain occupies 285–361; the sequence is QSASGNFMVQ…AQLQSFITTA (77 aa).

Belongs to the RlpA family.

The protein localises to the cell membrane. Its function is as follows. Lytic transglycosylase with a strong preference for naked glycan strands that lack stem peptides. This Escherichia coli (strain K12) protein is Endolytic peptidoglycan transglycosylase RlpA.